Here is a 361-residue protein sequence, read N- to C-terminus: Protein SGT1 homolog (361 aa).

3 TPR repeats span residues 3–36 (ASDLESKAKEAFVDDDFELAAELYTQAIDAGPAT), 37–70 (ADLYADRAQAHIKLGNYTEAVADANKAIGLDPTM), and 71–104 (HKAYYRKGAACIKLEEYQTAKAALELGSSYAPGD). Phosphothreonine is present on T150. Residues 159 to 248 (KPKYRHDYYN…AEQVTWTTLD (90 aa)) form the CS domain. The tract at residues 255–295 (AIPQKISTPAETAPRPSYPSSKSKKDWDKLEAEVKKEEKEE) is disordered. Phosphothreonine is present on T262. Residues 271 to 361 (SYPSSKSKKD…DGMELKKWEI (91 aa)) enclose the SGS domain. The span at 277–295 (SKKDWDKLEAEVKKEEKEE) shows a compositional bias: basic and acidic residues.

Belongs to the SGT1 family. In terms of processing, constitutively phosphorylated at Thr-262 and phosphorylated at Thr-150 upon infection with the fungal pathogen Ustilago maydis.

The protein resides in the cytoplasm. Its subcellular location is the nucleus. In terms of biological role, may act as positive regulator of basal defense. May be involved in basal disease resistance to the fungal pathogen Ustilago maydis. In Zea mays (Maize), this protein is Protein SGT1 homolog.